The following is a 440-amino-acid chain: MAENNENISKNVDVRPKTSRSRSADRKDGYVWSGKKLSWSKKSESYSDAETVNGIEKTEVSLRNQERKHSCSSIELDLDHSCGHRFLGRSLKQKLQDAVGQCFPIKNCSSRHSSGLPSKRKIHISELMLDKCPFPPRSDLAFRWHFIKRHTAPINSKSDEWVSTDLSQTELRDGQLKRRNMEENINCFSHTNVQPCVITTDNALCREGPMTGSVMNLVSNNSIEDSDMDSDDEILTLCTSSRKRNKPKWDLDDEILQLETPPKYHTQIDYVHCLVPDLLQINNNPCYWGVMDKYAAEALLEGKPEGTFLLRDSAQEDYLFSVSFRRYSRSLHARIEQWNHNFSFDAHDPCVFHSPDITGLLEHYKDPSACMFFEPLLSTPLIRTFPFSLQHICRTVICNCTTYDGIDALPIPSSMKLYLKEYHYKSKVRVLRIDAPEQQC.

Residues 1 to 10 are compositionally biased toward polar residues; that stretch reads MAENNENISK. The tract at residues 1 to 29 is disordered; sequence MAENNENISKNVDVRPKTSRSRSADRKDG. The segment covering 12 to 29 has biased composition (basic and acidic residues); it reads VDVRPKTSRSRSADRKDG. An SH2 domain is found at 286–381; the sequence is CYWGVMDKYA…FFEPLLSTPL (96 aa). One can recognise an SOCS box domain in the interval 376-425; it reads LLSTPLIRTFPFSLQHICRTVICNCTTYDGIDALPIPSSMKLYLKEYHYK.

It participates in protein modification; protein ubiquitination. Its function is as follows. SOCS family proteins form part of a classical negative feedback system that regulates cytokine signal transduction. Substrate-recognition component of a SCF-like ECS (Elongin BC-CUL2/5-SOCS-box protein) E3 ubiquitin-protein ligase complex which mediates the ubiquitination and subsequent proteasomal degradation of target proteins. Inhibits EGF signaling by mediating the degradation of the Tyr-phosphorylated EGF receptor/EGFR. The chain is Suppressor of cytokine signaling 4 (SOCS4) from Homo sapiens (Human).